The sequence spans 340 residues: UDP-N-acetylglucosamine--N-acetylmuramyl-(pentapeptide) pyrophosphoryl-undecaprenol N-acetylglucosamine transferase (340 aa).

UDP-N-acetyl-alpha-D-glucosamine contacts are provided by residues 10-12, Asn110, Ser171, and Gln272; that span reads TGG.

It belongs to the glycosyltransferase 28 family. MurG subfamily.

The protein localises to the cell membrane. The catalysed reaction is di-trans,octa-cis-undecaprenyl diphospho-N-acetyl-alpha-D-muramoyl-L-alanyl-D-glutamyl-meso-2,6-diaminopimeloyl-D-alanyl-D-alanine + UDP-N-acetyl-alpha-D-glucosamine = di-trans,octa-cis-undecaprenyl diphospho-[N-acetyl-alpha-D-glucosaminyl-(1-&gt;4)]-N-acetyl-alpha-D-muramoyl-L-alanyl-D-glutamyl-meso-2,6-diaminopimeloyl-D-alanyl-D-alanine + UDP + H(+). Its pathway is cell wall biogenesis; peptidoglycan biosynthesis. Its function is as follows. Cell wall formation. Catalyzes the transfer of a GlcNAc subunit on undecaprenyl-pyrophosphoryl-MurNAc-pentapeptide (lipid intermediate I) to form undecaprenyl-pyrophosphoryl-MurNAc-(pentapeptide)GlcNAc (lipid intermediate II). The sequence is that of UDP-N-acetylglucosamine--N-acetylmuramyl-(pentapeptide) pyrophosphoryl-undecaprenol N-acetylglucosamine transferase from Wolbachia pipientis subsp. Culex pipiens (strain wPip).